A 111-amino-acid chain; its full sequence is uncharacterized protein (111 aa).

Its subcellular location is the cytoplasm. It is found in the nucleus. This is an uncharacterized protein from Schizosaccharomyces pombe (strain 972 / ATCC 24843) (Fission yeast).